A 418-amino-acid polypeptide reads, in one-letter code: Tyrosine--tRNA ligase (418 aa).

Position 34 (Y34) interacts with L-tyrosine. Positions 39–48 (PTADSLHLGH) match the 'HIGH' region motif. Residues Y169 and Q173 each coordinate L-tyrosine. The 'KMSKS' region signature appears at 229–233 (KFGKS). K232 contacts ATP. The S4 RNA-binding domain occupies 352 to 418 (NNIVELLVSS…GKKKYFVLTY (67 aa)).

This sequence belongs to the class-I aminoacyl-tRNA synthetase family. TyrS type 1 subfamily. In terms of assembly, homodimer.

The protein resides in the cytoplasm. The catalysed reaction is tRNA(Tyr) + L-tyrosine + ATP = L-tyrosyl-tRNA(Tyr) + AMP + diphosphate + H(+). In terms of biological role, catalyzes the attachment of tyrosine to tRNA(Tyr) in a two-step reaction: tyrosine is first activated by ATP to form Tyr-AMP and then transferred to the acceptor end of tRNA(Tyr). The sequence is that of Tyrosine--tRNA ligase from Streptococcus pneumoniae (strain 70585).